A 21-amino-acid chain; its full sequence is Apolipophorin 2 (21 aa).

Expressed in hemolymph.

The protein localises to the secreted. Constitutes the major component of lipophorin, which mediates transport for various types of lipids in hemolymph. Acts by forming lipoprotein particles that bind lipoproteins and lipids. The sequence is that of Apolipophorin 2 from Galleria mellonella (Greater wax moth).